Consider the following 129-residue polypeptide: Follitropin subunit beta (129 aa).

Residues 1-20 form the signal peptide; sequence MKSVQLCFLFCCWRAICCKS. 6 disulfides stabilise this stretch: cysteine 21-cysteine 69, cysteine 35-cysteine 84, cysteine 38-cysteine 122, cysteine 46-cysteine 100, cysteine 50-cysteine 102, and cysteine 105-cysteine 112. Asparagine 25 and asparagine 42 each carry an N-linked (GlcNAc...) asparagine glycan.

This sequence belongs to the glycoprotein hormones subunit beta family. As to quaternary structure, heterodimer. The active follitropin is a heterodimer composed of an alpha chain/CGA shared with other hormones and a unique beta chain/FSHB shown here.

It localises to the secreted. Together with the alpha chain CGA constitutes follitropin, the follicle-stimulating hormone, and provides its biological specificity to the hormone heterodimer. Binds FSHR, a G protein-coupled receptor, on target cells to activate downstream signaling pathways. Follitropin is involved in follicle development and spermatogenesis in reproductive organs. This is Follitropin subunit beta (FSHB) from Ailuropoda melanoleuca (Giant panda).